A 465-amino-acid chain; its full sequence is GTPase Der (465 aa).

EngA-type G domains follow at residues 3-166 (FLVA…LNEY) and 184-358 (IHFS…ACAN). GTP is bound by residues 9–16 (GRANVGKS), 56–60 (DTGGI), 118–121 (NKVD), 190–197 (GRPNVGKS), 237–241 (DTAGV), and 302–305 (NKWD). The KH-like domain occupies 359 to 443 (KKITTADATC…PIVFEFKQSE (85 aa)). The interval 446–465 (FADRKNKRSKDEGSKSKKVK) is disordered.

Belongs to the TRAFAC class TrmE-Era-EngA-EngB-Septin-like GTPase superfamily. EngA (Der) GTPase family. As to quaternary structure, associates with the 50S ribosomal subunit.

Functionally, GTPase that plays an essential role in the late steps of ribosome biogenesis. The protein is GTPase Der of Francisella tularensis subsp. mediasiatica (strain FSC147).